We begin with the raw amino-acid sequence, 297 residues long: Cyclin-dependent kinase 1 (297 aa).

The Protein kinase domain occupies 4-293 (YQKVEKIGEG…AKRALQQNYL (290 aa)). Residues 10 to 18 (IGEGTYGVV) and lysine 33 each bind ATP. Threonine 14 is subject to Phosphothreonine. Position 15 is a phosphotyrosine (tyrosine 15). Aspartate 134 serves as the catalytic Proton acceptor. Threonine 167 is subject to Phosphothreonine.

It belongs to the protein kinase superfamily. CMGC Ser/Thr protein kinase family. CDC2/CDKX subfamily. As to quaternary structure, forms a stable but non-covalent complex with regulatory subunit suc1 and with a cyclin. Interacts with cyclin cdc13. Interacts with cyclin cig2. Interacts with cdc37.

Its subcellular location is the cytoplasm. The catalysed reaction is L-seryl-[protein] + ATP = O-phospho-L-seryl-[protein] + ADP + H(+). The enzyme catalyses L-threonyl-[protein] + ATP = O-phospho-L-threonyl-[protein] + ADP + H(+). With respect to regulation, phosphorylation at Thr-14 or Tyr-15 inactivates the enzyme, while phosphorylation at Thr-167 activates it. Cyclin-dependent kinase that acts as a master regulator of the mitotic and meiotic cell cycles. Required to drive the G1-S and G2-M transitions, and initiation of premeiotic DNA replication and meiosis II. More than 200 substrates have been identified. Substrate specificity is in part regulated by the bound cyclin protein. When complexed with cyclin cig2, it drives the G1-S phase transition. When complexed with cyclin cdc13, it drives the G2-M transition and initiation of meiosis II. Its activity rises throughout the cell cycle and substrate specificity is further influenced by activity thresholds with more sensitive substrates phosphorylated earlier in the cell cycle than less sensitive substrates. Phosphorylates dis1 during metaphase to ensure proper microtubule dynamics and accurate chromosome segregation. Phosphorylates the repetitive C-terminus of the large subunit of RNA polymerase II rpb1. Inactivated by checkpoint signaling following detection of cellular damage, leading to cell cycle arrest to allow damage repair. Inactivated during G2 DNA damage checkpoint signaling. Inactivated in response to defective RNA splicing. This is Cyclin-dependent kinase 1 from Schizosaccharomyces pombe (strain 972 / ATCC 24843) (Fission yeast).